We begin with the raw amino-acid sequence, 570 residues long: Sulfite reductase [NADPH] hemoprotein beta-component (570 aa).

Positions 434, 440, 479, and 483 each coordinate [4Fe-4S] cluster. Cys483 is a siroheme binding site.

This sequence belongs to the nitrite and sulfite reductase 4Fe-4S domain family. As to quaternary structure, alpha(8)-beta(8). The alpha component is a flavoprotein, the beta component is a hemoprotein. Siroheme is required as a cofactor. Requires [4Fe-4S] cluster as cofactor.

The enzyme catalyses hydrogen sulfide + 3 NADP(+) + 3 H2O = sulfite + 3 NADPH + 4 H(+). The protein operates within sulfur metabolism; hydrogen sulfide biosynthesis; hydrogen sulfide from sulfite (NADPH route): step 1/1. Functionally, component of the sulfite reductase complex that catalyzes the 6-electron reduction of sulfite to sulfide. This is one of several activities required for the biosynthesis of L-cysteine from sulfate. The sequence is that of Sulfite reductase [NADPH] hemoprotein beta-component from Escherichia coli (strain SMS-3-5 / SECEC).